Reading from the N-terminus, the 248-residue chain is 5'-nucleotidase SurE (248 aa).

4 residues coordinate a divalent metal cation: D8, D9, S39, and N91.

Belongs to the SurE nucleotidase family. It depends on a divalent metal cation as a cofactor.

It is found in the cytoplasm. It carries out the reaction a ribonucleoside 5'-phosphate + H2O = a ribonucleoside + phosphate. Functionally, nucleotidase that shows phosphatase activity on nucleoside 5'-monophosphates. The sequence is that of 5'-nucleotidase SurE from Geobacter sp. (strain M21).